We begin with the raw amino-acid sequence, 209 residues long: Glutathione S-transferase 1-1 (209 aa).

Residues 1 to 81 (MADFYYLPGS…YLVEKYGKTD (81 aa)) enclose the GST N-terminal domain. Residues serine 10, 51–53 (HTI), and 65–67 (ESR) each bind glutathione. The region spanning 87 to 209 (CPKKRAVINQ…GCLEFKKYFE (123 aa)) is the GST C-terminal domain.

Belongs to the GST superfamily. Theta family. Homodimer.

The enzyme catalyses RX + glutathione = an S-substituted glutathione + a halide anion + H(+). It catalyses the reaction 1,1,1-trichloro-2,2-bis(4-chlorophenyl)ethane = 1,1-dichloro-2,2-bis(4-chlorophenyl)ethylene + chloride + H(+). Its function is as follows. Conjugation of reduced glutathione to a wide number of exogenous and endogenous hydrophobic electrophiles. Has DDT dehydrochlorinase activity. The chain is Glutathione S-transferase 1-1 (GstD1) from Drosophila simulans (Fruit fly).